Here is a 144-residue protein sequence, read N- to C-terminus: Large ribosomal subunit protein uL13 (144 aa).

It belongs to the universal ribosomal protein uL13 family. As to quaternary structure, part of the 50S ribosomal subunit.

Its function is as follows. This protein is one of the early assembly proteins of the 50S ribosomal subunit, although it is not seen to bind rRNA by itself. It is important during the early stages of 50S assembly. The protein is Large ribosomal subunit protein uL13 of Nitrosomonas europaea (strain ATCC 19718 / CIP 103999 / KCTC 2705 / NBRC 14298).